We begin with the raw amino-acid sequence, 472 residues long: Nuclear hormone receptor family member nhr-2 (472 aa).

Composition is skewed to polar residues over residues 57–83, 90–112, 138–147, and 159–171; these read TATNSTYMPPQSKNTVTPNATSPLSQI, NDTISPPLTSQNSATTPNYHNQP, LSSTQSSPDN, and VRRNTFPASSAST. Disordered regions lie at residues 57–112 and 138–184; these read TATN…HNQP and LSST…RTNT. The nuclear receptor DNA-binding region spans 215-297; sequence KDRCMVCGDN…VGMNRDNVRV (83 aa). 2 NR C4-type zinc fingers span residues 218–238 and 267–285; these read CMVCGDNSTGYHYGVQSCEGC and CAANRGVRTRCQACRFAKC.

Belongs to the nuclear hormone receptor family.

It is found in the nucleus. Functionally, orphan nuclear receptor. The polypeptide is Nuclear hormone receptor family member nhr-2 (nhr-2) (Caenorhabditis elegans).